The primary structure comprises 150 residues: Deoxyuridine 5'-triphosphate nucleotidohydrolase (150 aa).

Substrate contacts are provided by residues arginine 69–glycine 71, asparagine 82, threonine 86–aspartate 88, and lysine 96.

It belongs to the dUTPase family. The cofactor is Mg(2+).

The catalysed reaction is dUTP + H2O = dUMP + diphosphate + H(+). It participates in pyrimidine metabolism; dUMP biosynthesis; dUMP from dCTP (dUTP route): step 2/2. In terms of biological role, this enzyme is involved in nucleotide metabolism: it produces dUMP, the immediate precursor of thymidine nucleotides and it decreases the intracellular concentration of dUTP so that uracil cannot be incorporated into DNA. This chain is Deoxyuridine 5'-triphosphate nucleotidohydrolase, found in Aquifex aeolicus (strain VF5).